Here is a 506-residue protein sequence, read N- to C-terminus: Maturase K (506 aa).

This sequence belongs to the intron maturase 2 family. MatK subfamily.

It is found in the plastid. The protein resides in the chloroplast. In terms of biological role, usually encoded in the trnK tRNA gene intron. Probably assists in splicing its own and other chloroplast group II introns. This is Maturase K from Trifolium microcephalum (Small-head clover).